A 192-amino-acid polypeptide reads, in one-letter code: Peptidyl-tRNA hydrolase (192 aa).

Position 18 (Y18) interacts with tRNA. H23 acts as the Proton acceptor in catalysis. TRNA-binding residues include F69, N71, and N117.

Belongs to the PTH family. Monomer.

The protein resides in the cytoplasm. The enzyme catalyses an N-acyl-L-alpha-aminoacyl-tRNA + H2O = an N-acyl-L-amino acid + a tRNA + H(+). Its function is as follows. Hydrolyzes ribosome-free peptidyl-tRNAs (with 1 or more amino acids incorporated), which drop off the ribosome during protein synthesis, or as a result of ribosome stalling. Catalyzes the release of premature peptidyl moieties from peptidyl-tRNA molecules trapped in stalled 50S ribosomal subunits, and thus maintains levels of free tRNAs and 50S ribosomes. In Neisseria meningitidis serogroup C (strain 053442), this protein is Peptidyl-tRNA hydrolase.